The primary structure comprises 313 residues: Ribosomal RNA small subunit methyltransferase H (313 aa).

S-adenosyl-L-methionine-binding positions include 31–33 (GGH), aspartate 51, phenylalanine 77, aspartate 95, and glutamine 102.

It belongs to the methyltransferase superfamily. RsmH family.

Its subcellular location is the cytoplasm. The enzyme catalyses cytidine(1402) in 16S rRNA + S-adenosyl-L-methionine = N(4)-methylcytidine(1402) in 16S rRNA + S-adenosyl-L-homocysteine + H(+). Functionally, specifically methylates the N4 position of cytidine in position 1402 (C1402) of 16S rRNA. This Xylella fastidiosa (strain 9a5c) protein is Ribosomal RNA small subunit methyltransferase H.